The chain runs to 185 residues: Ribosome-recycling factor (185 aa).

This sequence belongs to the RRF family.

It is found in the cytoplasm. Functionally, responsible for the release of ribosomes from messenger RNA at the termination of protein biosynthesis. May increase the efficiency of translation by recycling ribosomes from one round of translation to another. The chain is Ribosome-recycling factor from Shewanella piezotolerans (strain WP3 / JCM 13877).